The chain runs to 521 residues: MQVSIWMLVITVLAAVAAYFAGSRVNKKDSGLIVKQSEELAAKMIDDARREAETITKEADLKARAEIIEAKAGHDREITEKKKDLQILEKRLQQKEENLDKKFGLIEQKELDMLKKEQSFVAREQNLAAKSEELSRASDVQQAKLEEISGMSASEAKKELMTSMEDEAKHDAAKRIKAIEEEARETADKKAKEIISLAVQRYAGEYVAEKTVSVVPLPSDEMKGRIIGREGRNIRALEAATGIDLIIDDTPEAVILSGFNPVRREVARMSLEKLIGDGRIHPGRIEEVVAKATEEVDLGIKEAGERAAFDLGVHGIHPEIIKLIGRLKYRTSYTQNIYQHSLEVAFICGIMAAELGINVKQAKRAGLLHDLGKAVDHEVEGSHAVIGADLARKYGESAKIVHAIMAHHEDEKPNSVLAVLVQAADALSGARPGARREMMETYVKRLDDLERIATSFGGVTNSFAIQAGREIRVMVSSDHVTDEQSLIMARDIAKKIEAEMTYPGQIKVNVIRETRAVEYAR.

Residues 3-23 (VSIWMLVITVLAAVAAYFAGS) traverse the membrane as a helical segment. The KH domain occupies 211 to 271 (TVSVVPLPSD…VRREVARMSL (61 aa)). Residues 337–430 (IYQHSLEVAF…VQAADALSGA (94 aa)) enclose the HD domain.

Belongs to the RNase Y family.

It localises to the cell membrane. In terms of biological role, endoribonuclease that initiates mRNA decay. The protein is Ribonuclease Y of Pelobacter propionicus (strain DSM 2379 / NBRC 103807 / OttBd1).